The following is a 153-amino-acid chain: Insulin-like growth factor 1 (153 aa).

The tract at residues 49-77 (GPETLCGAELVDALQFVCGDRGFYFNKPT) is b. 3 cysteine pairs are disulfide-bonded: Cys-54–Cys-96, Cys-66–Cys-109, and Cys-95–Cys-100. A c region spans residues 78-89 (GYGSSSRRAPQT). An a region spans residues 90–110 (GIVDECCFRSCDLRRLEMYCA). Residues 111–118 (PLKPAKSA) form a d region. Positions 119–153 (RSVRAQRHTDMPKAQKEVHLKNTSRGSSGNKNYRM) are cleaved as a propeptide — e peptide. A disordered region spans residues 120 to 153 (SVRAQRHTDMPKAQKEVHLKNTSRGSSGNKNYRM). Positions 125–138 (RHTDMPKAQKEVHL) are enriched in basic and acidic residues. Polar residues predominate over residues 139 to 153 (KNTSRGSSGNKNYRM).

The protein belongs to the insulin family. In terms of assembly, forms a ternary complex with IGFR1 and ITGAV:ITGB3. Forms a ternary complex with IGFR1 and ITGA6:ITGB4. Forms a ternary complex with IGFBP3 and ALS.

It localises to the secreted. Functionally, the insulin-like growth factors, isolated from plasma, are structurally and functionally related to insulin but have a much higher growth-promoting activity. May be a physiological regulator of [1-14C]-2-deoxy-D-glucose (2DG) transport and glycogen synthesis in osteoblasts. Stimulates glucose transport in bone-derived osteoblastic (PyMS) cells and is effective at much lower concentrations than insulin, not only regarding glycogen and DNA synthesis but also with regard to enhancing glucose uptake. May play a role in synapse maturation. Ca(2+)-dependent exocytosis of IGF1 is required for sensory perception of smell in the olfactory bulb. Acts as a ligand for IGF1R. Binds to the alpha subunit of IGF1R, leading to the activation of the intrinsic tyrosine kinase activity which autophosphorylates tyrosine residues in the beta subunit thus initiating a cascade of down-stream signaling events leading to activation of the PI3K-AKT/PKB and the Ras-MAPK pathways. Binds to integrins ITGAV:ITGB3 and ITGA6:ITGB4. Its binding to integrins and subsequent ternary complex formation with integrins and IGFR1 are essential for IGF1 signaling. Induces the phosphorylation and activation of IGFR1, MAPK3/ERK1, MAPK1/ERK2 and AKT1. As part of the MAPK/ERK signaling pathway, acts as a negative regulator of apoptosis in cardiomyocytes via promotion of STUB1/CHIP-mediated ubiquitination and degradation of ICER-type isoforms of CREM. This chain is Insulin-like growth factor 1, found in Sus scrofa (Pig).